Here is a 240-residue protein sequence, read N- to C-terminus: Dihydromonapterin reductase (240 aa).

Catalysis depends on Y152, which acts as the Proton acceptor.

The protein belongs to the short-chain dehydrogenases/reductases (SDR) family. FolM subfamily.

It carries out the reaction (6S)-5,6,7,8-tetrahydrofolate + NADP(+) = 7,8-dihydrofolate + NADPH + H(+). It catalyses the reaction 7,8-dihydromonapterin + NADPH + H(+) = 5,6,7,8-tetrahydromonapterin + NADP(+). Its function is as follows. Catalyzes the reduction of dihydromonapterin to tetrahydromonapterin. Also has lower activity with dihydrofolate. In Escherichia coli O139:H28 (strain E24377A / ETEC), this protein is Dihydromonapterin reductase (folM).